A 566-amino-acid chain; its full sequence is 15-cis-phytoene desaturase, chloroplastic/chromoplastic (566 aa).

The N-terminal 86 residues, 1–86 (MVVFGNVSAA…ASLSASFRSA (86 aa)), are a transit peptide targeting the chloroplast and chromoplast. FAD is bound by residues A103, 122-123 (EA), K130, 147-148 (HI), and Y153. R288 lines the substrate pocket. 2 residues coordinate FAD: I330 and D519. A527 is a binding site for substrate. An FAD-binding site is contributed by M529.

The protein belongs to the carotenoid/retinoid oxidoreductase family. In terms of assembly, homotetramer. It depends on FAD as a cofactor.

The protein localises to the plastid. It is found in the chloroplast. The protein resides in the chromoplast. It localises to the membrane. It carries out the reaction 2 a plastoquinone + 15-cis-phytoene = 9,9',15-tri-cis-zeta-carotene + 2 a plastoquinol. The protein operates within carotenoid biosynthesis; lycopene biosynthesis. Converts phytoene into zeta-carotene via the intermediary of phytofluene by the symmetrical introduction of two double bonds at the C-11 and C-11' positions of phytoene with a concomitant isomerization of two neighboring double bonds at the C9 and C9' positions from trans to cis. This is 15-cis-phytoene desaturase, chloroplastic/chromoplastic (PDS) from Arabidopsis thaliana (Mouse-ear cress).